Reading from the N-terminus, the 354-residue chain is GTPase Obg (354 aa).

Residues 1-159 enclose the Obg domain; it reads MKYIDEAIIH…ADLKLELKVL (159 aa). One can recognise an OBG-type G domain in the interval 160 to 334; the sequence is ADVGLLGMPN…LTYAIMEFLE (175 aa). Residues 166-173, 191-195, 213-216, 284-287, and 315-317 contribute to the GTP site; these read GMPNAGKS, FTTMH, DIPG, NKVD, and SAM. S173 and T193 together coordinate Mg(2+).

The protein belongs to the TRAFAC class OBG-HflX-like GTPase superfamily. OBG GTPase family. In terms of assembly, monomer. Requires Mg(2+) as cofactor.

It is found in the cytoplasm. Functionally, an essential GTPase which binds GTP, GDP and possibly (p)ppGpp with moderate affinity, with high nucleotide exchange rates and a fairly low GTP hydrolysis rate. Plays a role in control of the cell cycle, stress response, ribosome biogenesis and in those bacteria that undergo differentiation, in morphogenesis control. In Nitrosospira multiformis (strain ATCC 25196 / NCIMB 11849 / C 71), this protein is GTPase Obg.